The chain runs to 784 residues: Cadherin-5 (784 aa).

An N-terminal signal peptide occupies residues 1-24 (MQRLTELATALGAFLGLLAVAAMA). The propeptide occupies 25–45 (GPNFPQIDTPNMLPAHHRQKR). Cadherin domains lie at 46–149 (DWIW…WPVF), 150–256 (SHQV…FPVF), 257–371 (TQST…PPVF), 372–476 (QRHF…DNPP), and 477–593 (EFAQ…MAAQ). The Extracellular portion of the chain corresponds to 46–599 (DWIWNQMHID…MAAQAGVSIQ (554 aa)). Ca(2+) is bound by residues Glu56 and Glu57. The N-linked (GlcNAc...) asparagine glycan is linked to Asn59. Ca(2+) contacts are provided by Asp107, Glu109, Asp141, Ile142, Asn143, Asp144, and Asn145. Asn155 carries an N-linked (GlcNAc...) asparagine glycan. Ca(2+) contacts are provided by Asp175, Asp177, His184, and Asp229. Asn441, Asn523, and Asn535 each carry an N-linked (GlcNAc...) asparagine glycan. A helical transmembrane segment spans residues 600–620 (ALVAIFLCILTITVITLLIIL). A required for interaction with PALS1 region spans residues 621-660 (RRRIRKQAHAHSKSALEIHEQLVTYDEEGGGEMDTTSYDV). Topologically, residues 621–784 (RRRIRKQAHA…GSDPQEELII (164 aa)) are cytoplasmic.

Part of a complex composed of AMOTL2, MAGI1 and CDH5, within the complex AMOTL2 acts as a scaffold protein for the interaction of MAGI1 with CDH5. The complex is required for coupling actin fibers to cell junctions in endothelial cells. Within the complex AMOTL2 (via its N-terminus) interacts with CDH5. Interacts (via cadherin 5 domain) with PTPRB. Interacts with TRPC4. Interacts with KRIT1. Interacts with PARD3. Interacts with RTN4 (isoform B). Interacts with PALS1; the interaction promotes PALS1 localization to cell junctions and is required for CDH5-mediated vascular lumen formation and endothelial cell polarity. Interacts with CTNND1/p120-catenin; the interaction controls CADH5 endocytosis. In terms of processing, phosphorylated on tyrosine residues by KDR/VEGFR-2. Dephosphorylated by PTPRB. O-glycosylated. In terms of tissue distribution, expressed in postnatal endothelial cells of the retinal vascular plexus (at protein level).

The protein resides in the cell junction. The protein localises to the adherens junction. It localises to the cell membrane. Its subcellular location is the cytoplasm. In terms of biological role, cadherins are calcium-dependent cell adhesion proteins. They preferentially interact with themselves in a homophilic manner in connecting cells; cadherins may thus contribute to the sorting of heterogeneous cell types. This cadherin may play an important role in endothelial cell biology through control of the cohesion and organization of the intercellular junctions. It associates with alpha-catenin forming a link to the cytoskeleton. Plays a role in coupling actin fibers to cell junctions in endothelial cells, via acting as a cell junctional complex anchor for AMOTL2 and MAGI1. Acts in concert with KRIT1 and PALS1 to establish and maintain correct endothelial cell polarity and vascular lumen. These effects are mediated by recruitment and activation of the Par polarity complex and RAP1B. Required for activation of PRKCZ and for localization of phosphorylated PRKCZ, PARD3, TIAM1 and RAP1B to the cell junction. Associates with CTNND1/p120-catenin to control CADH5 endocytosis. The protein is Cadherin-5 of Mus musculus (Mouse).